Here is a 1265-residue protein sequence, read N- to C-terminus: Kinesin-like protein Klp98A (1265 aa).

One can recognise a Kinesin motor domain in the interval 3 to 364; it reads SLKVAVRVRP…LRYANRAKNI (362 aa). 100 to 107 serves as a coordination point for ATP; it reads GQTGSGKT. 3 disordered regions span residues 597-621, 828-864, and 884-954; these read GASP…DPEL, EAES…DVSK, and VSSP…CTPS. 2 coiled-coil regions span residues 619-670 and 768-848; these read PELQ…EEMD and AQFI…LGNK. 3 stretches are compositionally biased toward polar residues: residues 846 to 857, 884 to 901, and 917 to 927; these read GNKSMSTSTSTN, VSSP…SNCS, and SGSSEETSRTC. Over residues 933 to 946 the composition is skewed to gly residues; it reads SGSGSGSVGIGGSG. Positions 1035–1071 form a coiled coil; that stretch reads DLNKAQLDEHIADLQDLQRRYIQMEQEMLQSVQDLEA. Residues 1129-1259 enclose the PX domain; it reads GEHFITIPSF…SFFKKGLFEN (131 aa).

This sequence belongs to the TRAFAC class myosin-kinesin ATPase superfamily. Kinesin family. Interacts with Atg8a and Rab14.

The protein resides in the early endosome. Functionally, plus end-directed motor protein involved in asymmetric cell division of sensory organ precursor (SOP) cells by playing a role in the asymmetric localization of Sara-expressing endosomes to the pIIa daughter cell but not to the pIIb cell. Targets Sara-expressing endosomes to the central spindle which is symmetrically arranged in early cell division. During late cytokinesis, central spindle asymmetry is generated by enrichment of Patronin on the pIIb side which protects microtubules from depolymerization by Klp10A while unprotected microtubules on the pIIa side are disassembled by Klp10A, leading to the asymmetric delivery of Sara-expressing endosomes to the pIIa daughter cell. Also plays a role in regulation of autophagosome formation, fusion and positioning and is required for normal localization of Rab14. This Drosophila melanogaster (Fruit fly) protein is Kinesin-like protein Klp98A.